The sequence spans 106 residues: Immunoglobulin lambda constant 6 (106 aa).

In terms of domain architecture, Ig-like spans 7-101 (PSVTLFPPSS…EGSTVEKTVA (95 aa)). Cys-28 and Cys-87 form a disulfide bridge.

Immunoglobulins are composed of two identical heavy chains and two identical light chains; disulfide-linked.

It is found in the secreted. It localises to the cell membrane. In terms of biological role, constant region of immunoglobulin light chains. Immunoglobulins, also known as antibodies, are membrane-bound or secreted glycoproteins produced by B lymphocytes. In the recognition phase of humoral immunity, the membrane-bound immunoglobulins serve as receptors which, upon binding of a specific antigen, trigger the clonal expansion and differentiation of B lymphocytes into immunoglobulins-secreting plasma cells. Secreted immunoglobulins mediate the effector phase of humoral immunity, which results in the elimination of bound antigens. The antigen binding site is formed by the variable domain of one heavy chain, together with that of its associated light chain. Thus, each immunoglobulin has two antigen binding sites with remarkable affinity for a particular antigen. The variable domains are assembled by a process called V-(D)-J rearrangement and can then be subjected to somatic hypermutations which, after exposure to antigen and selection, allow affinity maturation for a particular antigen. The protein is Immunoglobulin lambda constant 6 of Homo sapiens (Human).